The primary structure comprises 781 residues: Homeobox protein SIX4 (781 aa).

Over residues 1–10 (MSSSSPTGQI) the composition is skewed to polar residues. Disordered regions lie at residues 1–55 (MSSS…PLEP) and 270–321 (WFKN…GITN). At S2 the chain carries N-acetylserine. The segment at residues 223–282 (GEETVYCFKEKSRNALKELYKQNRYPSPAEKRHLAKITGLSLTQVSNWFKNRRQRDRNPS) is a DNA-binding region (homeobox). Composition is skewed to basic and acidic residues over residues 278 to 290 (DRNP…KSES) and 299 to 308 (ESSKGHEDLS). S640 is modified (phosphoserine).

This sequence belongs to the SIX/Sine oculis homeobox family. As to quaternary structure, interacts with EYA3; acts cooperatively with EYA3 to transactivate target genes through interaction and nuclear translocation of EYA3 protein.

It localises to the nucleus. The protein resides in the cytoplasm. Transcriptional regulator which can act as both a transcriptional repressor and activator by binding a DNA sequence on these target genes and is involved in processes like cell differentiation, cell migration and cell survival. Transactivates gene expression by binding a 5'-[CAT]A[CT][CT][CTG]GA[GAT]-3' motif present in the Trex site and a 5'-TCA[AG][AG]TTNC-3' motif present in the MEF3 site of the muscle-specific genes enhancer. Acts cooperatively with EYA proteins to transactivate their target genes through interaction and nuclear translocation of EYA protein. Acts synergistically with SIX1 to regulate target genes involved in formation of various organs, including muscle, kidney, gonad, ganglia, olfactory epithelium and cranial skeleton. Plays a role in several important steps of muscle development. Controls the genesis of hypaxial myogenic progenitors in the dermomyotome by transactivating PAX3 and the delamination and migration of the hypaxial precursors from the ventral lip to the limb buds through the transactivation of PAX3, MET and LBX1. Controls myoblast determination by transactivating MYF5, MYOD1 and MYF6. Controls somitic differentiation in myocyte through MYOG transactivation. Plays a role in synaptogenesis and sarcomere organization by participating in myofiber specialization during embryogenesis by activating fast muscle program in the primary myotome resulting in an up-regulation of fast muscle genes, including ATP2A1, MYL1 and TNNT3. Simultaneously, is also able to activate inhibitors of slow muscle genes, such as SOX6, HRASLS, and HDAC4, thereby restricting the activation of the slow muscle genes. During muscle regeneration, negatively regulates differentiation of muscle satellite cells through down-regulation of MYOG expression. During kidney development regulates the early stages of metanephros development and ureteric bud formation through regulation of GDNF, SALL1, PAX8 and PAX2 expression. Plays a role in gonad development by regulating both testis determination and size determination. In gonadal sex determination, transactivates ZFPM2 by binding a MEF3 consensus sequence, resulting in SRY up-regulation. In gonadal size determination, transactivates NR5A1 by binding a MEF3 consensus sequence resulting in gonadal precursor cell formation regulation. During olfactory development mediates the specification and patterning of olfactory placode through fibroblast growth factor and BMP4 signaling pathways and also regulates epithelial cell proliferation during placode formation. Promotes survival of sensory neurons during early trigeminal gangliogenesis. In the developing dorsal root ganglia, up-regulates SLC12A2 transcription. Regulates early thymus/parathyroid organogenesis through regulation of GCM2 and FOXN1 expression. Forms gustatory papillae during development of the tongue. Also plays a role during embryonic cranial skeleton morphogenesis. In Homo sapiens (Human), this protein is Homeobox protein SIX4 (SIX4).